The following is a 360-amino-acid chain: UDP-N-acetylglucosamine--N-acetylmuramyl-(pentapeptide) pyrophosphoryl-undecaprenol N-acetylglucosamine transferase (360 aa).

Residues 13–15 (TGG), Arg-164, Ser-192, and Gln-293 each bind UDP-N-acetyl-alpha-D-glucosamine.

This sequence belongs to the glycosyltransferase 28 family. MurG subfamily.

It localises to the cell inner membrane. The enzyme catalyses di-trans,octa-cis-undecaprenyl diphospho-N-acetyl-alpha-D-muramoyl-L-alanyl-D-glutamyl-meso-2,6-diaminopimeloyl-D-alanyl-D-alanine + UDP-N-acetyl-alpha-D-glucosamine = di-trans,octa-cis-undecaprenyl diphospho-[N-acetyl-alpha-D-glucosaminyl-(1-&gt;4)]-N-acetyl-alpha-D-muramoyl-L-alanyl-D-glutamyl-meso-2,6-diaminopimeloyl-D-alanyl-D-alanine + UDP + H(+). It functions in the pathway cell wall biogenesis; peptidoglycan biosynthesis. Its function is as follows. Cell wall formation. Catalyzes the transfer of a GlcNAc subunit on undecaprenyl-pyrophosphoryl-MurNAc-pentapeptide (lipid intermediate I) to form undecaprenyl-pyrophosphoryl-MurNAc-(pentapeptide)GlcNAc (lipid intermediate II). The polypeptide is UDP-N-acetylglucosamine--N-acetylmuramyl-(pentapeptide) pyrophosphoryl-undecaprenol N-acetylglucosamine transferase (Chromobacterium violaceum (strain ATCC 12472 / DSM 30191 / JCM 1249 / CCUG 213 / NBRC 12614 / NCIMB 9131 / NCTC 9757 / MK)).